A 149-amino-acid chain; its full sequence is Large ribosomal subunit protein uL15 (149 aa).

Composition is skewed to basic residues over residues 1 to 14 (MPTR…HRGH) and 21 to 30 (RVGKHRKHPG). The interval 1 to 43 (MPTRFSKTRKHRGHVSAGKGRVGKHRKHPGGRGMAGGQHHHRT) is disordered.

The protein belongs to the universal ribosomal protein uL15 family. In terms of assembly, component of the large ribosomal subunit (LSU). Mature N.crassa ribosomes consist of a small (40S) and a large (60S) subunit. The 40S small subunit contains 1 molecule of ribosomal RNA (18S rRNA) and at least 32 different proteins. The large 60S subunit contains 3 rRNA molecules (26S, 5.8S and 5S rRNA) and at least 42 different proteins.

The protein resides in the cytoplasm. Component of the ribosome, a large ribonucleoprotein complex responsible for the synthesis of proteins in the cell. The small ribosomal subunit (SSU) binds messenger RNAs (mRNAs) and translates the encoded message by selecting cognate aminoacyl-transfer RNA (tRNA) molecules. The large subunit (LSU) contains the ribosomal catalytic site termed the peptidyl transferase center (PTC), which catalyzes the formation of peptide bonds, thereby polymerizing the amino acids delivered by tRNAs into a polypeptide chain. The nascent polypeptides leave the ribosome through a tunnel in the LSU and interact with protein factors that function in enzymatic processing, targeting, and the membrane insertion of nascent chains at the exit of the ribosomal tunnel. This chain is Large ribosomal subunit protein uL15 (rpl-28), found in Neurospora crassa (strain ATCC 24698 / 74-OR23-1A / CBS 708.71 / DSM 1257 / FGSC 987).